The sequence spans 410 residues: NADH-quinone oxidoreductase subunit D (410 aa).

The protein belongs to the complex I 49 kDa subunit family. NDH-1 is composed of 14 different subunits. Subunits NuoB, C, D, E, F, and G constitute the peripheral sector of the complex.

The protein resides in the cell inner membrane. It carries out the reaction a quinone + NADH + 5 H(+)(in) = a quinol + NAD(+) + 4 H(+)(out). Its function is as follows. NDH-1 shuttles electrons from NADH, via FMN and iron-sulfur (Fe-S) centers, to quinones in the respiratory chain. The immediate electron acceptor for the enzyme in this species is believed to be ubiquinone. Couples the redox reaction to proton translocation (for every two electrons transferred, four hydrogen ions are translocated across the cytoplasmic membrane), and thus conserves the redox energy in a proton gradient. The protein is NADH-quinone oxidoreductase subunit D of Nitratiruptor sp. (strain SB155-2).